A 303-amino-acid polypeptide reads, in one-letter code: Ribosomal protein L11 methyltransferase (303 aa).

Positions 152, 173, 195, and 239 each coordinate S-adenosyl-L-methionine.

The protein belongs to the methyltransferase superfamily. PrmA family.

It is found in the cytoplasm. The enzyme catalyses L-lysyl-[protein] + 3 S-adenosyl-L-methionine = N(6),N(6),N(6)-trimethyl-L-lysyl-[protein] + 3 S-adenosyl-L-homocysteine + 3 H(+). Its function is as follows. Methylates ribosomal protein L11. This is Ribosomal protein L11 methyltransferase from Desulforapulum autotrophicum (strain ATCC 43914 / DSM 3382 / VKM B-1955 / HRM2) (Desulfobacterium autotrophicum).